The sequence spans 329 residues: Cytosolic arginine sensor for mTORC1 subunit 1 (329 aa).

Ser-14 bears the Phosphoserine mark. ACT domains lie at 72 to 138 and 260 to 321; these read AEAT…HTLA and GELW…EVLQ. Residues 111 to 112, Gly-274, 280 to 281, and 300 to 304 each bind L-arginine; these read SV, IV, and TFNFD.

It belongs to the GATS family. Forms homodimers and heterodimers with CASTOR2. Interacts with the GATOR2 complex which is composed of MIOS, SEC13, SEH1L, WDR24 and WDR59; the interaction is negatively regulated by arginine. Interacts with TM4SF5; the interaction is positively regulated by leucine and is negatively regulated by arginine. Post-translationally, phosphorylation at Ser-14 by AKT1, promoting the interaction between CASTOR1 and RNF167. In terms of processing, ubiquitinated by RNF167 via 'Lys-29'-polyubiquitination, leading to its degradation, releasing the GATOR2 complex. Ubiquitination by RNF167 is promoted by phosphorylation at Ser-14 by AKT1.

It is found in the cytoplasm. The protein resides in the cytosol. Its function is as follows. Functions as an intracellular arginine sensor within the amino acid-sensing branch of the TORC1 signaling pathway. As a homodimer or a heterodimer with CASTOR2, binds and inhibits the GATOR subcomplex GATOR2 and thereby mTORC1. Binding of arginine to CASTOR1 allosterically disrupts the interaction of CASTOR1-containing dimers with GATOR2 which can in turn activate mTORC1 and the TORC1 signaling pathway. In Pongo abelii (Sumatran orangutan), this protein is Cytosolic arginine sensor for mTORC1 subunit 1.